The following is a 350-amino-acid chain: dTDP-D-glucose 4,6-dehydratase (350 aa).

Threonine 142 is a binding site for substrate. The active-site Proton donor is aspartate 143. Residues glutamate 144 and tyrosine 166 each act as proton acceptor in the active site.

It belongs to the NAD(P)-dependent epimerase/dehydratase family. dTDP-glucose dehydratase subfamily. NAD(+) is required as a cofactor.

The catalysed reaction is dTDP-alpha-D-glucose = dTDP-4-dehydro-6-deoxy-alpha-D-glucose + H2O. This Homo sapiens (Human) protein is dTDP-D-glucose 4,6-dehydratase (TGDS).